We begin with the raw amino-acid sequence, 429 residues long: Histidinol dehydrogenase (429 aa).

Residues Y130, Q191, and N214 each contribute to the NAD(+) site. Residues S237, Q259, and H262 each contribute to the substrate site. Q259 and H262 together coordinate Zn(2+). Residues E327 and H328 each act as proton acceptor in the active site. Substrate contacts are provided by H328, D361, E415, and H420. Position 361 (D361) interacts with Zn(2+). H420 lines the Zn(2+) pocket.

This sequence belongs to the histidinol dehydrogenase family. The cofactor is Zn(2+).

The enzyme catalyses L-histidinol + 2 NAD(+) + H2O = L-histidine + 2 NADH + 3 H(+). It participates in amino-acid biosynthesis; L-histidine biosynthesis; L-histidine from 5-phospho-alpha-D-ribose 1-diphosphate: step 9/9. Its function is as follows. Catalyzes the sequential NAD-dependent oxidations of L-histidinol to L-histidinaldehyde and then to L-histidine. This Neisseria meningitidis serogroup B (strain ATCC BAA-335 / MC58) protein is Histidinol dehydrogenase.